Reading from the N-terminus, the 423-residue chain is Cyclin-B2-1 (423 aa).

Residues 1–61 (MDRASENRRL…EKSGKEEQKP (61 aa)) form a disordered region. The span at 49 to 60 (PMLEKSGKEEQK) shows a compositional bias: basic and acidic residues.

Belongs to the cyclin family. Cyclin AB subfamily. As to quaternary structure, interacts with CDKB2-1. Expressed in the intercalary meristem and the elongation zone of internodes. Expressed in adventitious roots at all nodes under submergence conditions.

Functionally, involved in the control of the cell cycle at the G2/M (mitosis) transition. May activate CDKB2-1 kinase. The polypeptide is Cyclin-B2-1 (CYCB2-1) (Oryza sativa subsp. indica (Rice)).